The sequence spans 214 residues: Ornithine decarboxylase antizyme 1 (214 aa).

Belongs to the ODC antizyme family. In terms of assembly, interacts with ODC1 and thereby sterically blocks ODC homodimerization.

Ornithine decarboxylase (ODC) antizyme protein that negatively regulates ODC activity and intracellular polyamine biosynthesis and uptake in response to increased intracellular polyamine levels. Binds to ODC monomers, inhibiting the assembly of the functional ODC homodimer, and targets the monomers for ubiquitin-independent proteolytic destruction by the 26S proteasome. In Danio rerio (Zebrafish), this protein is Ornithine decarboxylase antizyme 1 (oaz1a).